The chain runs to 673 residues: Estrogen receptor beta (673 aa).

A modulating region spans residues 1–181 (MASSPGLDPH…SAVGKADMHF (181 aa)). 2 consecutive NR C4-type zinc fingers follow at residues 182-202 (CAVC…CEGC) and 218-242 (CPAT…LRKC). Positions 182 to 247 (CAVCHDYASG…RLRKCYEVGM (66 aa)) form a DNA-binding region, nuclear receptor. An NR LBD domain is found at 316 to 552 (SPEEFISRIM…DLLLEMLDAN (237 aa)). The tract at residues 553–602 (TSSGGSQPSSSPSSETYSDQHQYPQPPSHLHPGSEQTTADHAIVPPLGPT) is disordered. Low complexity predominate over residues 554 to 566 (SSGGSQPSSSPSS).

This sequence belongs to the nuclear hormone receptor family. NR3 subfamily. As to quaternary structure, binds DNA as a homodimer. Can form a heterodimer with ER-alpha. As to expression, abundant in the liver and testes, less abundant in the ovary and barely detectable in the muscle.

The protein resides in the nucleus. Functionally, binds estrogens with an affinity similar to that of ER-alpha, and activates expression of reporter genes containing estrogen response elements (ERE) in an estrogen-dependent manner. This is Estrogen receptor beta (esr2) from Micropogonias undulatus (Atlantic croaker).